Consider the following 573-residue polypeptide: DNA ligase (573 aa).

E248 is an ATP binding site. K250 acts as the N6-AMP-lysine intermediate in catalysis. R255, R270, E299, F340, R432, and K438 together coordinate ATP.

It belongs to the ATP-dependent DNA ligase family. Requires Mg(2+) as cofactor.

It carries out the reaction ATP + (deoxyribonucleotide)n-3'-hydroxyl + 5'-phospho-(deoxyribonucleotide)m = (deoxyribonucleotide)n+m + AMP + diphosphate.. Functionally, DNA ligase that seals nicks in double-stranded DNA during DNA replication, DNA recombination and DNA repair. This is DNA ligase from Methanocaldococcus jannaschii (strain ATCC 43067 / DSM 2661 / JAL-1 / JCM 10045 / NBRC 100440) (Methanococcus jannaschii).